A 416-amino-acid chain; its full sequence is Homeobox even-skipped homolog protein 1 (416 aa).

Disordered stretches follow at residues 30 to 120 (AVSS…SDFY) and 138 to 178 (YQHS…LACS). The segment covering 72 to 82 (GLAGSAAGLGA) has biased composition (low complexity). Residues 102–114 (DSLSGQGQPSSSD) show a composition bias toward polar residues. The homeobox DNA-binding region spans 183-242 (MRRYRTAFTREQIARLEKEFYRENYVSRPRRCELAAALNLPETTIKVWFQNRRMKDKRQR).

This sequence belongs to the even-skipped homeobox family.

The protein localises to the nucleus. In terms of biological role, may play a role in the specification of neuronal cell types. May play a role in the dorsoventral specification of mesodermal cell fate. This Mus musculus (Mouse) protein is Homeobox even-skipped homolog protein 1 (Evx1).